Reading from the N-terminus, the 131-residue chain is Small ribosomal subunit protein eS6 (131 aa).

Residues 76 to 95 (APPGFKPKRKGERRRKTVRG) are disordered. The span at 81–93 (KPKRKGERRRKTV) shows a compositional bias: basic residues.

The protein belongs to the eukaryotic ribosomal protein eS6 family.

The chain is Small ribosomal subunit protein eS6 from Methanocaldococcus jannaschii (strain ATCC 43067 / DSM 2661 / JAL-1 / JCM 10045 / NBRC 100440) (Methanococcus jannaschii).